Reading from the N-terminus, the 555-residue chain is Phosphoglucomutase (555 aa).

Residues Arg-22 and Ser-114 each coordinate alpha-D-glucose 1,6-bisphosphate. The active-site Phosphoserine intermediate is Ser-114. Mg(2+) is bound by residues Ser-114, Asp-279, Asp-281, and Asp-283. Residue Ser-114 is modified to Phosphoserine. Residues Asp-283, Arg-284, Thr-347, Glu-366, Ser-368, and Lys-379 each coordinate alpha-D-glucose 1,6-bisphosphate.

Belongs to the phosphohexose mutase family. In terms of assembly, monomer. The cofactor is Mg(2+).

It is found in the cytoplasm. It carries out the reaction alpha-D-glucose 1-phosphate = alpha-D-glucose 6-phosphate. The catalysed reaction is O-phospho-L-seryl-[protein] + alpha-D-glucose 1-phosphate = alpha-D-glucose 1,6-bisphosphate + L-seryl-[protein]. The enzyme catalyses alpha-D-glucose 1,6-bisphosphate + L-seryl-[protein] = O-phospho-L-seryl-[protein] + alpha-D-glucose 6-phosphate. Its function is as follows. Catalyzes the reversible isomerization of alpha-D-glucose 1-phosphate to alpha-D-glucose 6-phosphate. The mechanism proceeds via the intermediate compound alpha-D-glucose 1,6-bisphosphate. Key enzyme in hexose metabolism. The reverse reaction is an essential step for biosynthesis because glucose 1-phosphate is the starting point for the synthesis of UDP-glucose, which acts as a precursor for the synthesis of oligosaccharides and trehalose. In Aspergillus oryzae (strain ATCC 42149 / RIB 40) (Yellow koji mold), this protein is Phosphoglucomutase (pgmA).